The primary structure comprises 194 residues: Peptidyl-tRNA hydrolase (194 aa).

Residue Tyr17 coordinates tRNA. The active-site Proton acceptor is the His22. Residues Phe69, Asn71, and Asn117 each coordinate tRNA.

This sequence belongs to the PTH family. Monomer.

Its subcellular location is the cytoplasm. The enzyme catalyses an N-acyl-L-alpha-aminoacyl-tRNA + H2O = an N-acyl-L-amino acid + a tRNA + H(+). Functionally, hydrolyzes ribosome-free peptidyl-tRNAs (with 1 or more amino acids incorporated), which drop off the ribosome during protein synthesis, or as a result of ribosome stalling. In terms of biological role, catalyzes the release of premature peptidyl moieties from peptidyl-tRNA molecules trapped in stalled 50S ribosomal subunits, and thus maintains levels of free tRNAs and 50S ribosomes. This Renibacterium salmoninarum (strain ATCC 33209 / DSM 20767 / JCM 11484 / NBRC 15589 / NCIMB 2235) protein is Peptidyl-tRNA hydrolase.